Consider the following 361-residue polypeptide: C3a anaphylatoxin chemotactic receptor (361 aa).

The Extracellular portion of the chain corresponds to 1 to 64; sequence MQQETQAPPL…FASSEVRVIS (64 aa). N36 and N50 each carry an N-linked (GlcNAc...) asparagine glycan. The helical transmembrane segment at 65-85 threads the bilayer; it reads LVVYCLTFLLGVPGNSFVIFI. The Cytoplasmic segment spans residues 86–96; sequence AGMKMKRTVNT. The helical transmembrane segment at 97 to 117 threads the bilayer; that stretch reads IWFLNLATADLLCCLSVPLTV. Residues 118–134 are Extracellular-facing; sequence AEILLDHHWPYGYAMCK. A disulfide bridge connects residues C133 and C210. A helical membrane pass occupies residues 135–155; it reads ILPSVIVISMFASVFTLNIIS. Topologically, residues 156-177 are cytoplasmic; sequence LDRFTQVITPVWAQNHRSLLLA. The chain crosses the membrane as a helical span at residues 178–198; that stretch reads RLSCVAVWILALLLSLPFMIL. The Extracellular segment spans residues 199–224; the sequence is RRTYEEFNMTVCTFDDDDFTTYGALS. Residues 225-245 traverse the membrane as a helical segment; sequence IVRFVFGFLIPLMSIVTCYGI. Over 246 to 262 the chain is Cytoplasmic; the sequence is IARKLGSRHFRSGRAFR. Residues 263 to 283 traverse the membrane as a helical segment; it reads IMLAVIVAFFLCWMPYHVLDL. At 284–301 the chain is on the extracellular side; it reads IRSYGGESSSMVALKVDP. Residues 302 to 322 form a helical membrane-spanning segment; that stretch reads LAISLAYVNSCLNPVLYVFMG. Residues 323 to 361 are Cytoplasmic-facing; sequence QDFKNKVQLSLRRVFERAFSEEGTQISRSTQSQQVHSVL.

It belongs to the G-protein coupled receptor 1 family.

It is found in the cell membrane. Receptor for the chemotactic and inflammatory peptide anaphylatoxin C3a. This receptor stimulates chemotaxis, granule enzyme release and superoxide anion production. This is C3a anaphylatoxin chemotactic receptor (c3ar1) from Danio rerio (Zebrafish).